Here is a 408-residue protein sequence, read N- to C-terminus: Imidazolonepropionase (408 aa).

Residues histidine 73 and histidine 75 each contribute to the Fe(3+) site. Positions 73 and 75 each coordinate Zn(2+). 4-imidazolone-5-propanoate-binding residues include arginine 82, tyrosine 145, and histidine 178. An N-formimidoyl-L-glutamate-binding site is contributed by tyrosine 145. Histidine 243 is a Fe(3+) binding site. Zn(2+) is bound at residue histidine 243. Glutamine 246 provides a ligand contact to 4-imidazolone-5-propanoate. Aspartate 318 is a binding site for Fe(3+). Aspartate 318 serves as a coordination point for Zn(2+). N-formimidoyl-L-glutamate contacts are provided by asparagine 320 and glycine 322. Position 323 (serine 323) interacts with 4-imidazolone-5-propanoate.

This sequence belongs to the metallo-dependent hydrolases superfamily. HutI family. It depends on Zn(2+) as a cofactor. Fe(3+) serves as cofactor.

Its subcellular location is the cytoplasm. The enzyme catalyses 4-imidazolone-5-propanoate + H2O = N-formimidoyl-L-glutamate. The protein operates within amino-acid degradation; L-histidine degradation into L-glutamate; N-formimidoyl-L-glutamate from L-histidine: step 3/3. In terms of biological role, catalyzes the hydrolytic cleavage of the carbon-nitrogen bond in imidazolone-5-propanoate to yield N-formimidoyl-L-glutamate. It is the third step in the universal histidine degradation pathway. The protein is Imidazolonepropionase of Shewanella sediminis (strain HAW-EB3).